A 230-amino-acid polypeptide reads, in one-letter code: Ribonuclease 3 (230 aa).

The RNase III domain occupies 5–125 (YSRFYNILGY…VIGAIYLDSD (121 aa)). Glu-40 is a Mg(2+) binding site. Residue Asp-44 is part of the active site. Positions 111 and 114 each coordinate Mg(2+). Glu-114 is an active-site residue. The DRBM domain maps to 153–223 (DSKSKLQEIL…AEKMIEMLSQ (71 aa)).

It belongs to the ribonuclease III family. As to quaternary structure, homodimer. Mg(2+) is required as a cofactor.

It is found in the cytoplasm. The enzyme catalyses Endonucleolytic cleavage to 5'-phosphomonoester.. In terms of biological role, digests double-stranded RNA. Involved in the processing of primary rRNA transcript to yield the immediate precursors to the large and small rRNAs (23S and 16S). Processes some mRNAs, and tRNAs when they are encoded in the rRNA operon. Processes pre-crRNA and tracrRNA of type II CRISPR loci if present in the organism. This chain is Ribonuclease 3, found in Francisella tularensis subsp. holarctica (strain FTNF002-00 / FTA).